The sequence spans 833 residues: CUB domain-containing protein 1 (833 aa).

The signal sequence occupies residues 1-29; the sequence is MAHSACGFSVALLGALLLGTARLLRGTEA. At 30–666 the chain is on the extracellular side; the sequence is SEIALPQRSG…VTLTPRTVDL (637 aa). N122, N180, N205, N270, N310, N342, and N386 each carry an N-linked (GlcNAc...) asparagine glycan. The CUB domain occupies 417-540; the sequence is CLDHRYCYRQ…QGLIVSYTPY (124 aa). An intrachain disulfide couples C476 to C499. Residues 667 to 687 form a helical membrane-spanning segment; sequence AVVIGAAGGGALLLFALVLII. Residues 688-833 lie on the Cytoplasmic side of the membrane; sequence CFVKKKKKVD…HTQGPVETEE (146 aa). Phosphotyrosine is present on Y731. A disordered region spans residues 783–833; sequence AKFTAEELAPSSPPESESEPYTFSHPNKGEIGVRETDIPLLHTQGPVETEE. Over residues 809-819 the composition is skewed to basic and acidic residues; sequence NKGEIGVRETD.

In terms of assembly, interacts with CDH2/N-cadherin, CDH3/P-cadherin, SDC1/syndecan-1, SDC4/syndecan-4 and the serine protease ST14/MT-SP1. Also interacts SRC and PRKCG/protein kinase C gamma. Post-translationally, phosphorylated on tyrosine by kinases of the SRC family such as SRC and YES as well as by the protein kinase C gamma/PRKCG. Dephosphorylated by phosphotyrosine phosphatases. Also phosphorylated by suramin, a heparin analog. Tyrosine phosphorylated in response to dissociation of integrin alpha-6 beta-4 from laminin-5. N-glycosylated. In terms of processing, a soluble form may also be produced by proteolytic cleavage at the cell surface (shedding). Another peptide of 80 kDa (p80) is present in cultured keratinocytes probably due to tryptic cleavage at an unidentified site on the N-terminal side. Converted to p80 by plasmin, a trypsin-like protease.

It localises to the cell membrane. May be involved in cell adhesion and cell matrix association. May play a role in the regulation of anchorage versus migration or proliferation versus differentiation via its phosphorylation. May be a novel marker for leukemia diagnosis and for immature hematopoietic stem cell subsets. Belongs to the tetraspanin web involved in tumor progression and metastasis. The chain is CUB domain-containing protein 1 (Cdcp1) from Mus musculus (Mouse).